The following is a 25-amino-acid chain: Pregnancy-associated glycoprotein 72 (25 aa).

Residues Asn-4 and Asn-21 are each glycosylated (N-linked (GlcNAc...) asparagine).

It belongs to the peptidase A1 family. Post-translationally, N-glycosylated. In terms of tissue distribution, expressed in chorionic epithelium (trophectoderm).

It is found in the secreted. The protein localises to the extracellular space. This chain is Pregnancy-associated glycoprotein 72, found in Bison bison (American bison).